A 245-amino-acid chain; its full sequence is Actin-like protein 10 (245 aa).

This sequence belongs to the actin family.

The sequence is that of Actin-like protein 10 (ACTL10) from Homo sapiens (Human).